The sequence spans 469 residues: MDETVSMKCGLEIHVQVDTNSKLFCTCPTNYNEVEPNTNICPVCMAHPGARPMPPNKKAVDMAIMVAKMLGCEIVLDKDIYFQRKHYNYPDLPSGYQRTSVPVGEHGKFLGVGITEVHLEEDPGQYKPDLGVVDYNRSGTPLIEIVSDPDIKSPEEAKEFLRQLLRLFNYIGNLRGEGSMRADVNISVNYNGVQGNRVEVKNVNSIKGVYKVLKYEFIRQKNILRRGGEIKRETRAFMEAQLITKAMRSKETADDYRHIPDPDLQPIVINKEWVKTVEEKMPETPMDKEKRFVEQYGIKLEDAKVMVADLALADVFETVVSELGKEKENISLAVIWIRNELRRVLAYNNIDFLESRLKPEHITELIQLITGKTISQKIGKKVIEIMVENKGEKTPKQIIKELGLTVIDSEAVLETACKEAIENNPKAVDDYLTGNEGALNFVVGQVMRATRGRAQPNKVVEILKKLINK.

It belongs to the GatB/GatE family. GatB subfamily. In terms of assembly, heterotrimer of A, B and C subunits.

The enzyme catalyses L-glutamyl-tRNA(Gln) + L-glutamine + ATP + H2O = L-glutaminyl-tRNA(Gln) + L-glutamate + ADP + phosphate + H(+). It catalyses the reaction L-aspartyl-tRNA(Asn) + L-glutamine + ATP + H2O = L-asparaginyl-tRNA(Asn) + L-glutamate + ADP + phosphate + 2 H(+). Its function is as follows. Allows the formation of correctly charged Asn-tRNA(Asn) or Gln-tRNA(Gln) through the transamidation of misacylated Asp-tRNA(Asn) or Glu-tRNA(Gln) in organisms which lack either or both of asparaginyl-tRNA or glutaminyl-tRNA synthetases. The reaction takes place in the presence of glutamine and ATP through an activated phospho-Asp-tRNA(Asn) or phospho-Glu-tRNA(Gln). The protein is Aspartyl/glutamyl-tRNA(Asn/Gln) amidotransferase subunit B of Methanococcus aeolicus (strain ATCC BAA-1280 / DSM 17508 / OCM 812 / Nankai-3).